Reading from the N-terminus, the 699-residue chain is Protein Scribble homolog let-413 (699 aa).

16 LRR repeats span residues 37 to 59 (KLEDLNLTMNNIKELDHRLFSLR), 60 to 81 (HLRILDVSDNELAVLPAEIGNL), 83 to 104 (QLIELNLNRNSIAKLPDTMQNC), 106 to 127 (LLTTLNLSSNPFTRLPETICEC), 129 to 150 (SITILSLNETSLTLLPSNIGSL), 152 to 174 (NLRVLEARDNLLRTIPLSIVELR), 175 to 196 (KLEELDLGQNELEALPAEIGKL), 198 to 219 (SLREFYVDINSLTSLPDSISGC), 221 to 242 (MLDQLDVSENQIIRLPENLGRM), 244 to 265 (NLTDLNISINEIIELPSSFGEL), 267 to 288 (RLQMLKADRNSLHNLTSEIGKC), 290 to 311 (SLTELYLGQNFLTDLPDTIGDL), 313 to 334 (QLTTLNVDCNNLSDIPDTIGNC), 336 to 357 (SLTVLSLRQNILTELPMTIGKC), 359 to 380 (NLTVLDVASNKLPHLPFTVKVL), and 382 to 403 (KLQALWLSENQTQSILKLSETR). The PDZ domain occupies 584–665 (AGGTSNDPAP…RSPSPVSRTS (82 aa)). The tract at residues 656-699 (RSPSPVSRTSEPSLNGSSHQLNHFDAGSPDSTMFVTSSTPVYAS) is disordered. 2 stretches are compositionally biased toward polar residues: residues 659–676 (SPVSRTSEPSLNGSSHQL) and 684–699 (PDSTMFVTSSTPVYAS).

Belongs to the LAP (LRR and PDZ) protein family. In terms of tissue distribution, expressed in the terminal web of the intestine. Expressed in seam cells. Expressed in the basolateral surfaces of epithelia and the nervous system. Expressed in the intestine, epidermis, excretory canal, reproductive system including vulva, uterus and spermatheca, in both larval and adult stage animals.

Its subcellular location is the basolateral cell membrane. Its function is as follows. Critical role in assembling adherens junctions; adapter protein involved in polarizing protein trafficking in epithelial cells. Necessary to maintain, not establish, the entire terminal web (organelle-depleted, intermediate filament-rich layer of cytoplasm that underlies the apical microvilli of polarized epithelial cells) or brush border assembly at the apical surface gut cells. Required for correct localization of ifb-2 intermediate filaments in the terminal web. Required for dlg-1 and hmr-1 lateral localization. Maintains cell polarity by correctly positioning adherens junction protein components including ajm-1 and hmp-1 at discrete subapical positions. Plays a role in the correct localization of the dlg-1-ajm-1 complex, polarity protein par-3, and actin microfilament to the apical junction of spermatheca cells, and is required for ovulation. Regulates the establishment of newly-formed epithelia in conjunction with dlg-1. Required in the epidermis during larval development. Plays a role in cellular junction integrity and in the directed outgrowth of seam cells, towards neighboring seam cells, during larval development; probably acts by promoting the assembly and stability of dlg-1 at apical junctions. The protein is Protein Scribble homolog let-413 of Caenorhabditis elegans.